The sequence spans 1038 residues: DNA polymerase delta catalytic subunit (1038 aa).

The tract at residues methionine 1–glutamate 29 is disordered. Zn(2+) is bound by residues cysteine 942, cysteine 945, cysteine 958, and cysteine 961. The CysA-type zinc finger occupies cysteine 942–cysteine 961. [4Fe-4S] cluster is bound by residues cysteine 992, cysteine 995, cysteine 1005, and cysteine 1010. Residues cysteine 992–cysteine 1010 carry the CysB motif motif.

Belongs to the DNA polymerase type-B family. In terms of assembly, heterodimer with subunits of 125 kDa and 50 kDa. The 125 kDa subunit contains the polymerase active site and most likely the active site for the 3'-5' exonuclease activity. It depends on [4Fe-4S] cluster as a cofactor.

It localises to the nucleus. It carries out the reaction DNA(n) + a 2'-deoxyribonucleoside 5'-triphosphate = DNA(n+1) + diphosphate. In terms of biological role, this polymerase possesses two enzymatic activities: DNA synthesis (polymerase) and an exonucleolytic activity that degrades single-stranded DNA in the 3'- to 5'-direction. This Candida albicans (Yeast) protein is DNA polymerase delta catalytic subunit (POL3).